The following is a 281-amino-acid chain: DegV domain-containing protein CPE2509 (281 aa).

The region spanning 4 to 279 (IAIITDSSCD…PGMVGVSIQK (276 aa)) is the DegV domain. Residues Thr60 and Ser93 each contribute to the hexadecanoate site.

In terms of biological role, may bind long-chain fatty acids, such as palmitate, and may play a role in lipid transport or fatty acid metabolism. The polypeptide is DegV domain-containing protein CPE2509 (Clostridium perfringens (strain 13 / Type A)).